The following is a 293-amino-acid chain: 4-diphosphocytidyl-2-C-methyl-D-erythritol kinase (293 aa).

The active site involves K10. 94–104 provides a ligand contact to ATP; the sequence is PVSAGLAGGSS. D136 is a catalytic residue.

Belongs to the GHMP kinase family. IspE subfamily.

It catalyses the reaction 4-CDP-2-C-methyl-D-erythritol + ATP = 4-CDP-2-C-methyl-D-erythritol 2-phosphate + ADP + H(+). It functions in the pathway isoprenoid biosynthesis; isopentenyl diphosphate biosynthesis via DXP pathway; isopentenyl diphosphate from 1-deoxy-D-xylulose 5-phosphate: step 3/6. Its function is as follows. Catalyzes the phosphorylation of the position 2 hydroxy group of 4-diphosphocytidyl-2C-methyl-D-erythritol. This Listeria monocytogenes serovar 1/2a (strain ATCC BAA-679 / EGD-e) protein is 4-diphosphocytidyl-2-C-methyl-D-erythritol kinase.